A 118-amino-acid polypeptide reads, in one-letter code: Small ribosomal subunit protein uS13 (118 aa).

The segment at 97-118 (VRGQRTKTNARTCKGPRKAIKK) is disordered.

The protein belongs to the universal ribosomal protein uS13 family. As to quaternary structure, part of the 30S ribosomal subunit. Forms a loose heterodimer with protein S19. Forms two bridges to the 50S subunit in the 70S ribosome.

Its function is as follows. Located at the top of the head of the 30S subunit, it contacts several helices of the 16S rRNA. In the 70S ribosome it contacts the 23S rRNA (bridge B1a) and protein L5 of the 50S subunit (bridge B1b), connecting the 2 subunits; these bridges are implicated in subunit movement. Contacts the tRNAs in the A and P-sites. This is Small ribosomal subunit protein uS13 from Buchnera aphidicola subsp. Schizaphis graminum (strain Sg).